The following is a 274-amino-acid chain: 3-methyl-2-oxobutanoate hydroxymethyltransferase (274 aa).

Mg(2+) contacts are provided by D49 and D88. 3-methyl-2-oxobutanoate-binding positions include 49 to 50 (DS), D88, and K118. Position 120 (E120) interacts with Mg(2+). E187 serves as the catalytic Proton acceptor.

It belongs to the PanB family. In terms of assembly, homodecamer; pentamer of dimers. It depends on Mg(2+) as a cofactor.

The protein resides in the cytoplasm. The catalysed reaction is 3-methyl-2-oxobutanoate + (6R)-5,10-methylene-5,6,7,8-tetrahydrofolate + H2O = 2-dehydropantoate + (6S)-5,6,7,8-tetrahydrofolate. The protein operates within cofactor biosynthesis; (R)-pantothenate biosynthesis; (R)-pantoate from 3-methyl-2-oxobutanoate: step 1/2. In terms of biological role, catalyzes the reversible reaction in which hydroxymethyl group from 5,10-methylenetetrahydrofolate is transferred onto alpha-ketoisovalerate to form ketopantoate. The polypeptide is 3-methyl-2-oxobutanoate hydroxymethyltransferase (Rhodopseudomonas palustris (strain BisB18)).